The primary structure comprises 164 residues: uncharacterized protein (164 aa).

The HTH marR-type domain occupies 28-157 (EAEILYQLQG…LIDVLARMRN (130 aa)). The segment at residues 71 to 94 (QSDLQKKVNIDSAAVTRHLKQLES) is a DNA-binding region (H-T-H motif).

This is an uncharacterized protein from Bacillus subtilis (strain 168).